We begin with the raw amino-acid sequence, 278 residues long: Shikimate dehydrogenase (NADP(+)) (278 aa).

Residues 19-21 (SLS) and Thr66 contribute to the shikimate site. Lys70 serves as the catalytic Proton acceptor. Positions 91 and 106 each coordinate shikimate. NADP(+) contacts are provided by residues 130 to 134 (GAGGS), 152 to 157 (NRTVEK), and Leu222. Tyr224 is a binding site for shikimate. NADP(+) is bound at residue Gly245.

It belongs to the shikimate dehydrogenase family. Homodimer.

It carries out the reaction shikimate + NADP(+) = 3-dehydroshikimate + NADPH + H(+). The protein operates within metabolic intermediate biosynthesis; chorismate biosynthesis; chorismate from D-erythrose 4-phosphate and phosphoenolpyruvate: step 4/7. Functionally, involved in the biosynthesis of the chorismate, which leads to the biosynthesis of aromatic amino acids. Catalyzes the reversible NADPH linked reduction of 3-dehydroshikimate (DHSA) to yield shikimate (SA). The chain is Shikimate dehydrogenase (NADP(+)) from Methanococcus aeolicus (strain ATCC BAA-1280 / DSM 17508 / OCM 812 / Nankai-3).